Here is a 48-residue protein sequence, read N- to C-terminus: Small, acid-soluble spore protein O (48 aa).

Residues 1–23 (MTKRKANHVINGMNAAKSQGNGA) are disordered.

Belongs to the SspO family.

It is found in the spore core. This Bacillus pumilus (strain SAFR-032) protein is Small, acid-soluble spore protein O.